We begin with the raw amino-acid sequence, 266 residues long: Glucosamine-6-phosphate deaminase (266 aa).

Residue aspartate 72 is the Proton acceptor; for enolization step of the active site. Aspartate 141 (for ring-opening step) is an active-site residue. The active-site Proton acceptor; for ring-opening step is histidine 143. Glutamate 148 acts as the For ring-opening step in catalysis.

Belongs to the glucosamine/galactosamine-6-phosphate isomerase family. NagB subfamily. In terms of assembly, homohexamer.

It catalyses the reaction alpha-D-glucosamine 6-phosphate + H2O = beta-D-fructose 6-phosphate + NH4(+). The protein operates within amino-sugar metabolism; N-acetylneuraminate degradation; D-fructose 6-phosphate from N-acetylneuraminate: step 5/5. Its activity is regulated as follows. Allosterically activated by N-acetylglucosamine 6-phosphate (GlcNAc6P). Catalyzes the reversible isomerization-deamination of glucosamine 6-phosphate (GlcN6P) to form fructose 6-phosphate (Fru6P) and ammonium ion. This chain is Glucosamine-6-phosphate deaminase, found in Klebsiella pneumoniae (strain 342).